Reading from the N-terminus, the 433-residue chain is MTDFFAGIPQIRYEGEGSSNEFAFRHYNPDEVILGKRMEEHLRFAVAWWHSFAWPGGDPFGGQTFNRPWFGDTLDLAKLKADVAFEMFDILGAPFFCFHDADIRPEGATFAESKRNLEEIVDHIGTRMEGSKTKLLWGTANLFSHRRFMSGAATNPDPDVFAWSAATVKGCMDATMKLGGANYVLWGGREGYETLLNTDLTREAENAGRFLQMVVDYKHKIGFQGTILIEPKPQEPSKHQYDYDVATVYGFLKRFGLEKEVKLNIEQGHAILAGHSFEHELALAASLGILGSIDMNRNDYQSGWDTDQFPHNHPEMALAYYEILRAGGFTTGGTNFDAKIRRQSLDPEDLVLAHVGGMDTCARALKAAARLYEDGSLEAARAARYAGWETPEAQAMLASSLEEIEARVLAEGINPEPRSGRQERLENLWNRFV.

Catalysis depends on residues His-99 and Asp-102. The Mg(2+) site is built by Glu-230, Glu-266, His-269, Asp-294, Asp-305, Asp-307, and Asp-337.

This sequence belongs to the xylose isomerase family. Homotetramer. Mg(2+) is required as a cofactor.

It is found in the cytoplasm. The enzyme catalyses alpha-D-xylose = alpha-D-xylulofuranose. The sequence is that of Xylose isomerase from Cereibacter sphaeroides (strain ATCC 17029 / ATH 2.4.9) (Rhodobacter sphaeroides).